Reading from the N-terminus, the 107-residue chain is Thiosulfate sulfurtransferase GlpE (107 aa).

Residues 17–105 form the Rhodanese domain; that stretch reads ADDNALLVDI…WRIAFPQQVS (89 aa). The active-site Cysteine persulfide intermediate is Cys65.

Belongs to the GlpE family.

The protein resides in the cytoplasm. It carries out the reaction thiosulfate + hydrogen cyanide = thiocyanate + sulfite + 2 H(+). It catalyses the reaction thiosulfate + [thioredoxin]-dithiol = [thioredoxin]-disulfide + hydrogen sulfide + sulfite + 2 H(+). Functionally, transferase that catalyzes the transfer of sulfur from thiosulfate to thiophilic acceptors such as cyanide or dithiols. May function in a CysM-independent thiosulfate assimilation pathway by catalyzing the conversion of thiosulfate to sulfite, which can then be used for L-cysteine biosynthesis. This Erwinia tasmaniensis (strain DSM 17950 / CFBP 7177 / CIP 109463 / NCPPB 4357 / Et1/99) protein is Thiosulfate sulfurtransferase GlpE.